The sequence spans 541 residues: Metal transporter Nramp6 (541 aa).

Positions 1–18 (MAPLPAAATATASSAATP) are enriched in low complexity. Residues 1–44 (MAPLPAAATATASSAATPADDEAHSLLPSTPSNEEDDDDLEERA) form a disordered region. The next 12 membrane-spanning stretches (helical) occupy residues 87–107 (LWLF…PGNL), 120–140 (TLLW…LLAA), 172–192 (VAMV…IKIL), 196–216 (FLPL…FLSL), 224–244 (LEAV…WMFT), 270–290 (AVGV…SALV), 316–336 (IALA…AKGF), 358–378 (FGGG…AAGQ), 404–424 (IRSL…ALFF), 436–456 (WLNV…ITLV), 474–494 (VTWT…LDFF), and 502–522 (LSGS…LYLI).

Belongs to the NRAMP (TC 2.A.55) family.

The protein localises to the membrane. In terms of biological role, probable metal transporter. In Oryza sativa subsp. japonica (Rice), this protein is Metal transporter Nramp6 (NRAMP6).